We begin with the raw amino-acid sequence, 51 residues long: Bacteriochlorophyll e-binding protein (51 aa).

Position 25 (His-25) interacts with a bacteriochlorophyll e.

This sequence belongs to the BChl C/E-binding protein family.

It localises to the chlorosome. The protein resides in the chlorosome envelope. In terms of biological role, component of the photosynthetic apparatus. The light harvesting B740 complex binds bacteriochlorophyll e. In Chlorobium phaeovibrioides, this protein is Bacteriochlorophyll e-binding protein (csmA).